The chain runs to 285 residues: 4-diphosphocytidyl-2-C-methyl-D-erythritol kinase (285 aa).

K9 is an active-site residue. 89-99 (PLGAGLGGGSS) provides a ligand contact to ATP. The active site involves D131.

The protein belongs to the GHMP kinase family. IspE subfamily.

It carries out the reaction 4-CDP-2-C-methyl-D-erythritol + ATP = 4-CDP-2-C-methyl-D-erythritol 2-phosphate + ADP + H(+). Its pathway is isoprenoid biosynthesis; isopentenyl diphosphate biosynthesis via DXP pathway; isopentenyl diphosphate from 1-deoxy-D-xylulose 5-phosphate: step 3/6. Catalyzes the phosphorylation of the position 2 hydroxy group of 4-diphosphocytidyl-2C-methyl-D-erythritol. The sequence is that of 4-diphosphocytidyl-2-C-methyl-D-erythritol kinase from Thermodesulfovibrio yellowstonii (strain ATCC 51303 / DSM 11347 / YP87).